Consider the following 309-residue polypeptide: Putative HTH-type transcriptional regulatory protein AF_1787 (309 aa).

The HTH cro/C1-type domain maps to 131–185 (IREARERLGLSVGDMAKMLGVSRRTVKKYEEGTDTTLSTAAKIEEIIGTFAIKEI). Residues 142 to 161 (VGDMAKMLGVSRRTVKKYEE) constitute a DNA-binding region (H-T-H motif).

The sequence is that of Putative HTH-type transcriptional regulatory protein AF_1787 from Archaeoglobus fulgidus (strain ATCC 49558 / DSM 4304 / JCM 9628 / NBRC 100126 / VC-16).